An 83-amino-acid polypeptide reads, in one-letter code: NAD(P)H-quinone oxidoreductase subunit L (83 aa).

2 helical membrane passes run 15 to 35 and 53 to 73; these read LFVL…VPLA and LGVY…APFI.

This sequence belongs to the complex I NdhL subunit family. As to quaternary structure, NDH-1 can be composed of about 15 different subunits; different subcomplexes with different compositions have been identified which probably have different functions.

It is found in the cellular thylakoid membrane. The enzyme catalyses a plastoquinone + NADH + (n+1) H(+)(in) = a plastoquinol + NAD(+) + n H(+)(out). It catalyses the reaction a plastoquinone + NADPH + (n+1) H(+)(in) = a plastoquinol + NADP(+) + n H(+)(out). Its function is as follows. NDH-1 shuttles electrons from an unknown electron donor, via FMN and iron-sulfur (Fe-S) centers, to quinones in the respiratory and/or the photosynthetic chain. The immediate electron acceptor for the enzyme in this species is believed to be plastoquinone. Couples the redox reaction to proton translocation, and thus conserves the redox energy in a proton gradient. Cyanobacterial NDH-1 also plays a role in inorganic carbon-concentration. The chain is NAD(P)H-quinone oxidoreductase subunit L from Synechococcus sp. (strain CC9902).